The primary structure comprises 591 residues: MAFLQQISGLGALERSCPSIMIGSSFRSGNGRVFDGRGIAYLGSREKFGFNRRRRVVLRVVAMSSSSTPFKMNLNEYMVTLEKPLGIRFALSADGKIFVHAIKKGSNAEKARIIMVGDTLKKASDSSGGTLVEIKDFGDTKKMLVEKTGSFSLVLERPFSPFPIQYLLHLSDLDLLYNRGRVSFVTWNKNLLSSNLRASSQGSGNSGYAAFSSKFFTPQGWKLLNRQSNSFQSGTKKNILSPPISPLVSVFSEDVPGDGEWGYGNFPLEEYIKALDRSKGELSYNHALGMRYSKITEQIYVGSCIQTEEDVENLSEAGITAILNFQGGTEAQNWGIDSQSINDACQKSEVLMINYPIKDADSFDLRKKLPLCVGLLLRLLKKNHRVFVTCTTGFDRSSACVIAYLHWMTDTSLHAAYSFVTGLHACKPDRPAIAWATWDLIAMVDDGKHDGTPTHSVTFVWNGHEGEEVLLVGDFTGNWKEPIKATHKGGPRFETEVRLTQGKYYYKYIINGDWRHSATSPTERDDRGNTNNIIVVGDVANVRPTIQQPRKDANIIKVIERVLTESERFRLAKAARCIAFSVCPIRLCPKS.

The transit peptide at 1–61 (MAFLQQISGL…RRRRVVLRVV (61 aa)) directs the protein to the chloroplast. The Tyrosine-protein phosphatase domain occupies 291 to 453 (RYSKITEQIY…VDDGKHDGTP (163 aa)). The active-site Phosphocysteine intermediate is the Cys-390. 390–396 (CTTGFDR) is a binding site for substrate.

Its subcellular location is the plastid. The protein resides in the chloroplast. Its function is as follows. Starch granule-associated phosphoglucan phosphatase involved in the control of starch accumulation. Participates in the regulation of the initial steps of starch degradation at the granule surface. May release a different set of phosphate groups from those removed by DSP4. The protein is Phosphoglucan phosphatase LSF1, chloroplastic (LSF1) of Arabidopsis thaliana (Mouse-ear cress).